A 936-amino-acid chain; its full sequence is Isoleucine--tRNA ligase (936 aa).

The 'HIGH' region signature appears at 58–68 (PYANGRAHLGT). E561 serves as a coordination point for L-isoleucyl-5'-AMP. A 'KMSKS' region motif is present at residues 602 to 606 (KMSKS). Position 605 (K605) interacts with ATP. 4 residues coordinate Zn(2+): C899, C902, C919, and C922.

This sequence belongs to the class-I aminoacyl-tRNA synthetase family. IleS type 1 subfamily. Monomer. It depends on Zn(2+) as a cofactor.

It is found in the cytoplasm. It catalyses the reaction tRNA(Ile) + L-isoleucine + ATP = L-isoleucyl-tRNA(Ile) + AMP + diphosphate. Functionally, catalyzes the attachment of isoleucine to tRNA(Ile). As IleRS can inadvertently accommodate and process structurally similar amino acids such as valine, to avoid such errors it has two additional distinct tRNA(Ile)-dependent editing activities. One activity is designated as 'pretransfer' editing and involves the hydrolysis of activated Val-AMP. The other activity is designated 'posttransfer' editing and involves deacylation of mischarged Val-tRNA(Ile). The chain is Isoleucine--tRNA ligase from Coxiella burnetii (strain CbuK_Q154) (Coxiella burnetii (strain Q154)).